A 601-amino-acid chain; its full sequence is Elongation factor 4 (601 aa).

The 183-residue stretch at 2–184 (DLIRNFSIIA…EMIARVPPPT (183 aa)) folds into the tr-type G domain. GTP-binding positions include 14–19 (DHGKST) and 131–134 (NKID).

This sequence belongs to the TRAFAC class translation factor GTPase superfamily. Classic translation factor GTPase family. LepA subfamily.

The protein resides in the cell inner membrane. The catalysed reaction is GTP + H2O = GDP + phosphate + H(+). Functionally, required for accurate and efficient protein synthesis under certain stress conditions. May act as a fidelity factor of the translation reaction, by catalyzing a one-codon backward translocation of tRNAs on improperly translocated ribosomes. Back-translocation proceeds from a post-translocation (POST) complex to a pre-translocation (PRE) complex, thus giving elongation factor G a second chance to translocate the tRNAs correctly. Binds to ribosomes in a GTP-dependent manner. The polypeptide is Elongation factor 4 (Polynucleobacter asymbioticus (strain DSM 18221 / CIP 109841 / QLW-P1DMWA-1) (Polynucleobacter necessarius subsp. asymbioticus)).